The following is a 240-amino-acid chain: Small ribosomal subunit protein uS3 (240 aa).

The KH type-2 domain occupies 39–107 (IREFIKEECK…ELHLNIVEVR (69 aa)). Residues 212 to 222 (PQARDRRHAEL) are compositionally biased toward basic and acidic residues. Residues 212–240 (PQARDRRHAELQEGGGPRPQGGGRPRRDR) form a disordered region. Residues 224 to 234 (EGGGPRPQGGG) are compositionally biased toward gly residues.

It belongs to the universal ribosomal protein uS3 family. In terms of assembly, part of the 30S ribosomal subunit. Forms a tight complex with proteins S10 and S14.

Binds the lower part of the 30S subunit head. Binds mRNA in the 70S ribosome, positioning it for translation. This chain is Small ribosomal subunit protein uS3, found in Dinoroseobacter shibae (strain DSM 16493 / NCIMB 14021 / DFL 12).